The following is a 706-amino-acid chain: Elongation factor G (706 aa).

Residues 8–290 (NRYRNIGICA…AVIDYLPAPT (283 aa)) enclose the tr-type G domain. Residues 17 to 24 (AHVDAGKT), 88 to 92 (DTPGH), and 142 to 145 (NKMD) each bind GTP.

This sequence belongs to the TRAFAC class translation factor GTPase superfamily. Classic translation factor GTPase family. EF-G/EF-2 subfamily.

It localises to the cytoplasm. Functionally, catalyzes the GTP-dependent ribosomal translocation step during translation elongation. During this step, the ribosome changes from the pre-translocational (PRE) to the post-translocational (POST) state as the newly formed A-site-bound peptidyl-tRNA and P-site-bound deacylated tRNA move to the P and E sites, respectively. Catalyzes the coordinated movement of the two tRNA molecules, the mRNA and conformational changes in the ribosome. This chain is Elongation factor G, found in Stutzerimonas stutzeri (strain A1501) (Pseudomonas stutzeri).